The sequence spans 309 residues: Putative taste receptor type 2 member 36 (309 aa).

Residue M1 is a topological domain, extracellular. The chain crosses the membrane as a helical span at residues 2–22 (ICFLLIILSILVVFAFVLGNF). The Cytoplasmic segment spans residues 23–46 (SNGFIALVNVIDWVKRQKISSADQ). A helical membrane pass occupies residues 47–67 (ILTALVVSRVGLLWVILLHWY). The Extracellular portion of the chain corresponds to 68 to 79 (SNVLNSALYSSE). Residues 80 to 100 (VIIFISNAWAIINHFSIWLAT) traverse the membrane as a helical segment. Residues 101 to 126 (SLSIFYLLKIVNFSRLIFHHLKRKAK) are Cytoplasmic-facing. A helical membrane pass occupies residues 127-147 (SVVLVIVLGPLVFLVCHLVMK). At 148 to 181 (HTYINVWTKEYEGNVTWKIKLRNAIHLSNLTVST) the chain is on the extracellular side. Residues N161 and N176 are each glycosylated (N-linked (GlcNAc...) asparagine). Residues 182–202 (LANLIPFTLTLISFLLLIYSL) form a helical membrane-spanning segment. At 203-229 (CKHLKKMQLHGKGSQDPSTKVHIKALQ) the chain is on the cytoplasmic side. Residues 230 to 250 (TVTSFLLLCAIYFLSMIISVC) form a helical membrane-spanning segment. Topologically, residues 251–259 (NFGRLEKQP) are extracellular. Residues 260–280 (VFMFCQAIIFSYPSTHPFILI) form a helical membrane-spanning segment. Over 281 to 309 (LGNKKLKQIFLSVFWQMRYWVKGEKPSSP) the chain is Cytoplasmic.

This sequence belongs to the G-protein coupled receptor T2R family.

It is found in the membrane. In terms of biological role, putative taste receptor which may play a role in the perception of bitterness. The polypeptide is Putative taste receptor type 2 member 36 (Homo sapiens (Human)).